The following is a 361-amino-acid chain: F-box protein pof7 (361 aa).

One can recognise an F-box domain in the interval 105–157 (NESVVPNILKLPDEVLLVILENCIRDLHDLRYLSSIALTCKHFAKALRADSLY).

In terms of assembly, interacts with skp1.

Its subcellular location is the cytoplasm. In Schizosaccharomyces pombe (strain 972 / ATCC 24843) (Fission yeast), this protein is F-box protein pof7 (pof7).